A 21-amino-acid polypeptide reads, in one-letter code: MLNERFSILVLLLILLTFSLG.

This sequence belongs to the glycosyl hydrolase 10 (cellulase F) family.

It catalyses the reaction Endohydrolysis of (1-&gt;4)-beta-D-xylosidic linkages in xylans.. Its pathway is glycan degradation; xylan degradation. The chain is Endo-1,4-beta-xylanase A from Dictyoglomus sp. (strain B4A).